The sequence spans 253 residues: Tryptophan synthase alpha chain (253 aa).

Catalysis depends on proton acceptor residues glutamate 47 and aspartate 58.

It belongs to the TrpA family. Tetramer of two alpha and two beta chains.

The catalysed reaction is (1S,2R)-1-C-(indol-3-yl)glycerol 3-phosphate + L-serine = D-glyceraldehyde 3-phosphate + L-tryptophan + H2O. It functions in the pathway amino-acid biosynthesis; L-tryptophan biosynthesis; L-tryptophan from chorismate: step 5/5. Functionally, the alpha subunit is responsible for the aldol cleavage of indoleglycerol phosphate to indole and glyceraldehyde 3-phosphate. The protein is Tryptophan synthase alpha chain of Lactococcus lactis subsp. cremoris (strain SK11).